Consider the following 442-residue polypeptide: 5-methylthioadenosine/S-adenosylhomocysteine deaminase (442 aa).

Positions 72 and 74 each coordinate Zn(2+). The substrate site is built by E101 and H194. H221 contacts Zn(2+). E224 and D309 together coordinate substrate. Position 309 (D309) interacts with Zn(2+).

It belongs to the metallo-dependent hydrolases superfamily. MTA/SAH deaminase family. Zn(2+) is required as a cofactor.

The catalysed reaction is S-adenosyl-L-homocysteine + H2O + H(+) = S-inosyl-L-homocysteine + NH4(+). The enzyme catalyses S-methyl-5'-thioadenosine + H2O + H(+) = S-methyl-5'-thioinosine + NH4(+). Catalyzes the deamination of 5-methylthioadenosine and S-adenosyl-L-homocysteine into 5-methylthioinosine and S-inosyl-L-homocysteine, respectively. Is also able to deaminate adenosine. This Teredinibacter turnerae (strain ATCC 39867 / T7901) protein is 5-methylthioadenosine/S-adenosylhomocysteine deaminase.